We begin with the raw amino-acid sequence, 78 residues long: Translational regulator CsrA (78 aa).

It belongs to the CsrA/RsmA family. As to quaternary structure, homodimer; the beta-strands of each monomer intercalate to form a hydrophobic core, while the alpha-helices form wings that extend away from the core.

The protein localises to the cytoplasm. Its function is as follows. A translational regulator that binds mRNA to regulate translation initiation and/or mRNA stability. Usually binds in the 5'-UTR at or near the Shine-Dalgarno sequence preventing ribosome-binding, thus repressing translation. Its main target seems to be the major flagellin gene, while its function is anatagonized by FliW. The protein is Translational regulator CsrA of Desulfotalea psychrophila (strain LSv54 / DSM 12343).